Consider the following 163-residue polypeptide: Seed allergenic protein RAG1 (163 aa).

The first 27 residues, 1–27 (MASNKVVFSVLLLVVLSVLAAAMATMA), serve as a signal peptide directing secretion. Cystine bridges form between Cys39/Cys90, Cys53/Cys78, Cys61/Cys122, Cys79/Cys138, and Cys92/Cys150.

Belongs to the cereal trypsin/alpha-amylase inhibitor family. In terms of processing, five disulfide bonds are present.

The protein localises to the secreted. In terms of biological role, seed storage protein. This Oryza sativa subsp. japonica (Rice) protein is Seed allergenic protein RAG1 (RAG1).